We begin with the raw amino-acid sequence, 424 residues long: MDERPPEISGSLLTIGDEILLGDILNGNARHIALELRNRGFRLDRMITVGDREEDIVSSLVLCLADARFIIVTGGLGPTDDDRTNAAVSRAFDRPLVADEAYVGRLKERLAERGQAWSNEVAKMAELPAGAVKIGLDMAGFFIDHGNVPCYFLPGVPGEMKFLLAEVVIPDLARRFPLRGAYLKEVVRVQGMVESEVNRRLRDLDCRRIGVEIGYLPQGSENWVTLFAVAASEEECRTRIEKVREEVVARLGEKHISGRNDECLEKVVGERLRERGWRMAAAESCTGGLLSTRLTSIAGSSDYFDRAFITYSNQAKQDHLGVSEEMLRVHGAVSEPVALAMAEGACRGARVEVALGITGIAGPAGGSAEKPVGTVCIACVTPKEKRVEKHRFEGVRESIRQSAAQAALLLLWRVLTDDSNLHCR.

Belongs to the CinA family.

The chain is CinA-like protein from Syntrophobacter fumaroxidans (strain DSM 10017 / MPOB).